A 146-amino-acid polypeptide reads, in one-letter code: D-aminoacyl-tRNA deacylase (146 aa).

The short motif at 138-139 (GP) is the Gly-cisPro motif, important for rejection of L-amino acids element.

This sequence belongs to the DTD family. As to quaternary structure, homodimer.

The protein localises to the cytoplasm. The enzyme catalyses glycyl-tRNA(Ala) + H2O = tRNA(Ala) + glycine + H(+). It carries out the reaction a D-aminoacyl-tRNA + H2O = a tRNA + a D-alpha-amino acid + H(+). An aminoacyl-tRNA editing enzyme that deacylates mischarged D-aminoacyl-tRNAs. Also deacylates mischarged glycyl-tRNA(Ala), protecting cells against glycine mischarging by AlaRS. Acts via tRNA-based rather than protein-based catalysis; rejects L-amino acids rather than detecting D-amino acids in the active site. By recycling D-aminoacyl-tRNA to D-amino acids and free tRNA molecules, this enzyme counteracts the toxicity associated with the formation of D-aminoacyl-tRNA entities in vivo and helps enforce protein L-homochirality. The chain is D-aminoacyl-tRNA deacylase from Xanthomonas axonopodis pv. citri (strain 306).